Reading from the N-terminus, the 221-residue chain is Interleukin-12 subunit alpha (221 aa).

A signal peptide spans 1–25 (MCPLRSLLLISTLVLLHHLPHLSLG). 3 disulfides stabilise this stretch: C39–C112, C66–C198, and C87–C125. A glycan (N-linked (GlcNAc...) asparagine) is linked at N95.

The protein belongs to the IL-6 superfamily. In terms of assembly, heterodimer with IL12B; disulfide-linked. This heterodimer is known as interleukin IL-12. Heterodimer with EBI3/IL27B; not disulfide-linked. This heterodimer is known as interleukin IL-35. Interacts with NBR1; this interaction promotes IL-12 secretion.

Its subcellular location is the secreted. In terms of biological role, heterodimerizes with IL12B to form the IL-12 cytokine or with EBI3/IL27B to form the IL-35 cytokine. IL-12 is primarily produced by professional antigen-presenting cells (APCs) such as B-cells and dendritic cells (DCs) as well as macrophages and granulocytes and regulates T-cell and natural killer-cell responses, induces the production of interferon-gamma (IFN-gamma), favors the differentiation of T-helper 1 (Th1) cells and is an important link between innate resistance and adaptive immunity. Mechanistically, exerts its biological effects through a receptor composed of IL12R1 and IL12R2 subunits. Binding to the receptor results in the rapid tyrosine phosphorylation of a number of cellular substrates including the JAK family kinases TYK2 and JAK2. In turn, recruited STAT4 gets phosphorylated and translocates to the nucleus where it regulates cytokine/growth factor responsive genes. As part of IL-35, plays essential roles in maintaining the immune homeostasis of the liver microenvironment and also functions as an immune-suppressive cytokine. Mediates biological events through unconventional receptors composed of IL12RB2 and gp130/IL6ST heterodimers or homodimers. Signaling requires the transcription factors STAT1 and STAT4, which form a unique heterodimer that binds to distinct DNA sites. This chain is Interleukin-12 subunit alpha (IL12A), found in Ovis aries (Sheep).